The sequence spans 395 residues: Multidrug resistance protein MdtL (395 aa).

12 helical membrane passes run 4–24 (FLLC…MYLV), 42–62 (IAFS…GKIA), 69–89 (PVAI…SRAS), 93–113 (LFLS…VVAF), 131–151 (LLNG…HLIM), 158–178 (SLFY…LFIL), 217–237 (VSVI…VMGF), 247–267 (ALTA…LGLF), 271–291 (TLML…SLAH), 295–315 (VTLF…GVAM), 328–350 (VASS…LAAI), and 355–377 (AMNM…IFSV).

It belongs to the major facilitator superfamily. DHA1 family. MdtL (TC 2.A.1.2.22) subfamily.

The protein resides in the cell inner membrane. This Salmonella dublin (strain CT_02021853) protein is Multidrug resistance protein MdtL.